Here is a 185-residue protein sequence, read N- to C-terminus: Ribosome-recycling factor (185 aa).

Belongs to the RRF family.

It localises to the cytoplasm. Functionally, responsible for the release of ribosomes from messenger RNA at the termination of protein biosynthesis. May increase the efficiency of translation by recycling ribosomes from one round of translation to another. This chain is Ribosome-recycling factor, found in Mycolicibacterium vanbaalenii (strain DSM 7251 / JCM 13017 / BCRC 16820 / KCTC 9966 / NRRL B-24157 / PYR-1) (Mycobacterium vanbaalenii).